We begin with the raw amino-acid sequence, 171 residues long: UPF0398 protein Sez_1569 (171 aa).

This sequence belongs to the UPF0398 family.

The protein is UPF0398 protein Sez_1569 of Streptococcus equi subsp. zooepidemicus (strain MGCS10565).